We begin with the raw amino-acid sequence, 85 residues long: Beta-insect depressant toxin BjIT2 (85 aa).

An N-terminal signal peptide occupies residues 1-21 (MKLLLLLVISASMLLECLVNA). Residues 22-82 (DGYIRKKDGC…TWKSSTNTCG (61 aa)) enclose the LCN-type CS-alpha/beta domain. Cystine bridges form between cysteine 31-cysteine 81, cysteine 35-cysteine 56, cysteine 42-cysteine 63, and cysteine 46-cysteine 65. Residues 83 to 85 (RKK) constitute a propeptide, removed by a carboxypeptidase.

Belongs to the long (4 C-C) scorpion toxin superfamily. Sodium channel inhibitor family. Beta subfamily. C-terminal basic residues are removed by a carboxypeptidase. Expressed by the venom gland.

It is found in the secreted. Its function is as follows. Depressant insect beta-toxins cause a transient contraction paralysis followed by a slow flaccid paralysis. They bind voltage-independently at site-4 of sodium channels (Nav) and shift the voltage of activation toward more negative potentials thereby affecting sodium channel activation and promoting spontaneous and repetitive firing. This toxin is active only on insects. The polypeptide is Beta-insect depressant toxin BjIT2 (Hottentotta judaicus (Black scorpion)).